A 439-amino-acid chain; its full sequence is Polygalacturonase QRT2 (439 aa).

The signal sequence occupies residues 1–21 (MYEKIIILSVFLLTFLPSCFS). The interval 43-69 (RQHQHGHNTRNSHLKNRHGYAPRSSPR) is disordered. Residues 44 to 62 (QHQHGHNTRNSHLKNRHGY) show a composition bias toward basic residues. PbH1 repeat units lie at residues 201 to 250 (CNNL…HVSG) and 251 to 272 (TQNI…SIVS). The active-site Proton donor is the D265. The active site involves H288. 2 PbH1 repeats span residues 304–325 (VSNV…RIKT) and 333–354 (AKNI…IINQ).

It belongs to the glycosyl hydrolase 28 family. As to expression, expressed predominantly in roots with lower expression levels in rosette leaves, flower buds and siliques. Bearly detected in seeds. Found in flowers undergoing floral organ abscission. Also expressed early in anther development, at the time of microspore separation.

It is found in the secreted. The protein localises to the cell wall. The catalysed reaction is (1,4-alpha-D-galacturonosyl)n+m + H2O = (1,4-alpha-D-galacturonosyl)n + (1,4-alpha-D-galacturonosyl)m.. Polygalacturonase required for cell type-specific pectin degradation to separate microspores. Involved in anther dehiscence and floral organ abscission. The sequence is that of Polygalacturonase QRT2 (QRT2) from Arabidopsis thaliana (Mouse-ear cress).